A 162-amino-acid chain; its full sequence is GTP-dependent dephospho-CoA kinase (162 aa).

GTP-binding residues include D40, V41, V42, D59, K61, and E111.

Belongs to the GTP-dependent DPCK family.

The enzyme catalyses 3'-dephospho-CoA + GTP = GDP + CoA + H(+). Its pathway is cofactor biosynthesis; coenzyme A biosynthesis. Catalyzes the GTP-dependent phosphorylation of the 3'-hydroxyl group of dephosphocoenzyme A to form coenzyme A (CoA). This chain is GTP-dependent dephospho-CoA kinase, found in Sulfurisphaera tokodaii (strain DSM 16993 / JCM 10545 / NBRC 100140 / 7) (Sulfolobus tokodaii).